Here is a 130-residue protein sequence, read N- to C-terminus: Arsenical-resistance protein 2 (130 aa).

Residues 17–124 enclose the Rhodanese domain; the sequence is QRKDFQVVDL…WETHCRESNL (108 aa).

Involved in resistance to arsenic compounds. The polypeptide is Arsenical-resistance protein 2 (ARR2) (Saccharomyces cerevisiae (strain ATCC 204508 / S288c) (Baker's yeast)).